The chain runs to 258 residues: ADP-dependent (S)-NAD(P)H-hydrate dehydratase (258 aa).

The YjeF C-terminal domain maps to 1–258 (MGRLQRTLSN…VIECIPKTIR (258 aa)). Gly-201 contributes to the AMP binding site. A (6S)-NADPHX-binding site is contributed by Asp-202.

The protein belongs to the NnrD/CARKD family. Homotetramer. Mg(2+) serves as cofactor.

The catalysed reaction is (6S)-NADHX + ADP = AMP + phosphate + NADH + H(+). It catalyses the reaction (6S)-NADPHX + ADP = AMP + phosphate + NADPH + H(+). Functionally, catalyzes the dehydration of the S-form of NAD(P)HX at the expense of ADP, which is converted to AMP. Together with NAD(P)HX epimerase, which catalyzes the epimerization of the S- and R-forms, the enzyme allows the repair of both epimers of NAD(P)HX, a damaged form of NAD(P)H that is a result of enzymatic or heat-dependent hydration. The sequence is that of ADP-dependent (S)-NAD(P)H-hydrate dehydratase from Natrialba magadii (strain ATCC 43099 / DSM 3394 / CCM 3739 / CIP 104546 / IAM 13178 / JCM 8861 / NBRC 102185 / NCIMB 2190 / MS3) (Natronobacterium magadii).